The following is an 845-amino-acid chain: AdoMet-dependent rRNA methyltransferase SPB1 (845 aa).

S-adenosyl-L-methionine is bound by residues G58, W60, D78, D94, and D119. Residue K159 is the Proton acceptor of the active site. Disordered stretches follow at residues 223–247 and 279–298; these read GGGN…SQRQ and SLNK…DDDH. Coiled coils occupy residues 366–402 and 464–502; these read TEEQ…KEII and DEEE…ERDA. Basic and acidic residues predominate over residues 496-512; sequence RKAERDANYRAKQARGD. 3 disordered regions span residues 496–546, 587–660, and 788–821; these read RKAE…DDDE, ENKT…HQQK, and KLNK…VKGK. 4 stretches are compositionally biased toward acidic residues: residues 513–528, 536–545, 610–624, and 633–648; these read ADDE…NDDV, MESESDDDDD, NEND…ESDF, and DDDD…DDEV. The stretch at 739–796 forms a coiled coil; sequence IKKVLEAQSRKKLRALKRLEKIKKKSDLINEDSGKSERDKADEISKLMKKLNKKQKQK. Basic residues predominate over residues 788–797; sequence KLNKKQKQKP.

Belongs to the class I-like SAM-binding methyltransferase superfamily. RNA methyltransferase RlmE family. SPB1 subfamily. Component of the nucleolar and nucleoplasmic pre-60S ribosomal particle.

The protein resides in the nucleus. It is found in the nucleolus. It catalyses the reaction a ribonucleotide in rRNA + S-adenosyl-L-methionine = a 2'-O-methylribonucleotide in rRNA + S-adenosyl-L-homocysteine + H(+). In terms of biological role, required for proper assembly of pre-ribosomal particles during the biogenesis of the 60S ribosomal subunit. The chain is AdoMet-dependent rRNA methyltransferase SPB1 from Candida albicans (strain SC5314 / ATCC MYA-2876) (Yeast).